A 214-amino-acid polypeptide reads, in one-letter code: C-type lectin domain family 2 member L (214 aa).

The interval 1–56 (MEPAREPPSRARPPPPLAARPAPAPAAPRPRSPAEAEARGPEGLLRRSGSGYEGST) is disordered. Positions 10–31 (RARPPPPLAARPAPAPAAPRPR) are enriched in pro residues. S32 is subject to Phosphoserine. A helical membrane pass occupies residues 69–89 (LLLGAIAVLLFAILVVMSILA). One can recognise a C-type lectin domain in the interval 107–209 (YGRKCYFFSE…CLMTRPWVCS (103 aa)). 2 cysteine pairs are disulfide-bonded: C128–C208 and C187–C200.

Its subcellular location is the membrane. The protein is C-type lectin domain family 2 member L (CLEC2L) of Homo sapiens (Human).